We begin with the raw amino-acid sequence, 89 residues long: MKDSYISIVIAYLMVTFILVSSMPIEGEKGELGPHRLPCPPEYANYCFNGKCVHVVAQDEPGKPCYSCICDKFYIGKRCGTLDLTNPDF.

An N-terminal signal peptide occupies residues 1–30 (MKDSYISIVIAYLMVTFILVSSMPIEGEKG). 3 cysteine pairs are disulfide-bonded: C39–C52, C47–C68, and C70–C79. The region spanning 43–80 (YANYCFNGKCVHVVAQDEPGKPCYSCICDKFYIGKRCG) is the EGF-like domain.

Belongs to the EGF domain peptide family. As to expression, expressed by the venom gland.

Its subcellular location is the secreted. Its function is as follows. Ant peptide with probable defensive activity which acts as a potent agonist of the mammalian epidermal growth factor receptor (EGFR). Mimics, both structurally and functionally, vertebrate epidermal growth factor (EGF) peptide hormones. In vivo, intraplantar injection in mice causes long-lasting (several days) hypersensitivity of the injected paw to both mechanical and thermal stimuli. Its long-lasting effect is unusual for venom toxins whose effects are usually immediate. One possible explanation is that it would reduce the duration of a nest attack, discourage future attacks, or enhance the actions of subsequent exposure to other pain-inducing venom peptides. The sequence is that of OMEGA-ectatommitoxin(02)-Rm1a from Rhytidoponera metallica (Australian green-headed ant).